We begin with the raw amino-acid sequence, 65 residues long: Alpha-toxin Bot11 (65 aa).

The LCN-type CS-alpha/beta domain maps to 2-64 (KDGYIVDDRN…VRTVQAGRCR (63 aa)). 4 disulfides stabilise this stretch: Cys12–Cys63, Cys16–Cys36, Cys22–Cys46, and Cys26–Cys48.

Belongs to the long (4 C-C) scorpion toxin superfamily. Sodium channel inhibitor family. Alpha subfamily. In terms of tissue distribution, expressed by the venom gland.

It localises to the secreted. Functionally, alpha toxins bind voltage-independently at site-3 of sodium channels (Nav) and inhibit the inactivation of the activated channels, thereby blocking neuronal transmission. The sequence is that of Alpha-toxin Bot11 from Buthus occitanus tunetanus (Common European scorpion).